A 179-amino-acid chain; its full sequence is MSRLQEQYKNEILPALQKELDMSNPMQVPKIEKITINMGLGSALGDKKVLQSALKEMSLISGQKPLICNARKSVASFKLREGNPIGCKVTLRKERMYEFLDRLINIAIPRIRDFRGFKATAFDGRGNYNMGITEQITFAEIDFEKVTRILGMDIAITTTAKSDEEAKKLLVMFKFPFKG.

The protein belongs to the universal ribosomal protein uL5 family. Part of the 50S ribosomal subunit; part of the 5S rRNA/L5/L18/L25 subcomplex. Contacts the 5S rRNA and the P site tRNA. Forms a bridge to the 30S subunit in the 70S ribosome.

In terms of biological role, this is one of the proteins that bind and probably mediate the attachment of the 5S RNA into the large ribosomal subunit, where it forms part of the central protuberance. In the 70S ribosome it contacts protein S13 of the 30S subunit (bridge B1b), connecting the 2 subunits; this bridge is implicated in subunit movement. Contacts the P site tRNA; the 5S rRNA and some of its associated proteins might help stabilize positioning of ribosome-bound tRNAs. The protein is Large ribosomal subunit protein uL5 of Ruthia magnifica subsp. Calyptogena magnifica.